A 145-amino-acid polypeptide reads, in one-letter code: Large ribosomal subunit protein uL13 (145 aa).

The protein belongs to the universal ribosomal protein uL13 family. Part of the 50S ribosomal subunit.

Functionally, this protein is one of the early assembly proteins of the 50S ribosomal subunit, although it is not seen to bind rRNA by itself. It is important during the early stages of 50S assembly. The protein is Large ribosomal subunit protein uL13 of Halobacterium salinarum (strain ATCC 700922 / JCM 11081 / NRC-1) (Halobacterium halobium).